An 87-amino-acid polypeptide reads, in one-letter code: Small ribosomal subunit protein bS20 (87 aa).

Basic residues predominate over residues 1-11 (MANHKSALKRI). A disordered region spans residues 1-23 (MANHKSALKRIKQTEKRTERNRH).

This sequence belongs to the bacterial ribosomal protein bS20 family.

Binds directly to 16S ribosomal RNA. The polypeptide is Small ribosomal subunit protein bS20 (Geotalea uraniireducens (strain Rf4) (Geobacter uraniireducens)).